We begin with the raw amino-acid sequence, 1117 residues long: Protein ECM21 (1117 aa).

Disordered regions lie at residues 1–48 (MPFI…RRSS) and 63–155 (VHSP…YSQI). Residues 11–34 (KNSSHSLSETDLNQSKGQPFQPSP) are compositionally biased toward polar residues. Serine 18 is modified (phosphoserine). Over residues 70-81 (NNTTKGGNNNGN) the composition is skewed to low complexity. Position 115 is a phosphoserine (serine 115). Over residues 117-130 (SDSATTTPRSSTSD) the composition is skewed to low complexity. Serine 140 is subject to Phosphoserine. Residue lysine 191 forms a Glycyl lysine isopeptide (Lys-Gly) (interchain with G-Cter in ubiquitin) linkage. 2 disordered regions span residues 275–312 (ATTA…ELNT) and 486–523 (YRQD…AQAH). Serine 286 carries the phosphoserine modification. Residues 501 to 519 (SSSSLSSTTSSLKLTETES) are compositionally biased toward low complexity. Phosphoserine occurs at positions 527 and 550. Glycyl lysine isopeptide (Lys-Gly) (interchain with G-Cter in ubiquitin) cross-links involve residues lysine 577, lysine 651, and lysine 712. The residue at position 775 (serine 775) is a Phosphoserine. Glycyl lysine isopeptide (Lys-Gly) (interchain with G-Cter in ubiquitin) cross-links involve residues lysine 794, lysine 807, and lysine 1024. 2 disordered regions span residues 1016–1065 (RSRF…KDKQ) and 1079–1117 (KDDE…SDEE). Polar residues predominate over residues 1027–1059 (STPSPVNRSHNSSPTNGLSQANGTVRIPNATTE). At serine 1035 the chain carries Phosphoserine. Low complexity predominate over residues 1089-1098 (SSSSADSLLS).

It belongs to the CSR2 family.

The protein resides in the cytoplasm. Functionally, may be involved in cell wall organization and biogenesis. The sequence is that of Protein ECM21 (ECM21) from Saccharomyces cerevisiae (strain ATCC 204508 / S288c) (Baker's yeast).